Consider the following 494-residue polypeptide: Alpha-amylase-related protein (494 aa).

Residues 1 to 20 (MIKFALALTLCLAGASLSLA) form the signal peptide. Pyrrolidone carboxylic acid is present on Gln-21. The cysteines at positions 48 and 104 are disulfide-linked. The Ca(2+) site is built by Asn-118, Gln-169, and Asp-178. The cysteines at positions 157 and 171 are disulfide-linked. Arg-206 is a binding site for chloride. Asp-208 functions as the Nucleophile in the catalytic mechanism. His-212 contributes to the Ca(2+) binding site. The active-site Proton donor is Glu-245. Residues Asn-308 and Arg-343 each contribute to the chloride site. Disulfide bonds link Cys-376–Cys-382, Cys-418–Cys-441, and Cys-448–Cys-460.

The protein belongs to the glycosyl hydrolase 13 family. In terms of assembly, monomer. Requires Ca(2+) as cofactor. Chloride serves as cofactor.

Its subcellular location is the secreted. It catalyses the reaction Endohydrolysis of (1-&gt;4)-alpha-D-glucosidic linkages in polysaccharides containing three or more (1-&gt;4)-alpha-linked D-glucose units.. This is Alpha-amylase-related protein (Amyrel) from Drosophila auraria (Fruit fly).